The following is a 244-amino-acid chain: Phosphoribosylaminoimidazole-succinocarboxamide synthase (244 aa).

It belongs to the SAICAR synthetase family.

The catalysed reaction is 5-amino-1-(5-phospho-D-ribosyl)imidazole-4-carboxylate + L-aspartate + ATP = (2S)-2-[5-amino-1-(5-phospho-beta-D-ribosyl)imidazole-4-carboxamido]succinate + ADP + phosphate + 2 H(+). The protein operates within purine metabolism; IMP biosynthesis via de novo pathway; 5-amino-1-(5-phospho-D-ribosyl)imidazole-4-carboxamide from 5-amino-1-(5-phospho-D-ribosyl)imidazole-4-carboxylate: step 1/2. The chain is Phosphoribosylaminoimidazole-succinocarboxamide synthase from Prochlorococcus marinus (strain SARG / CCMP1375 / SS120).